The chain runs to 282 residues: Secretory carrier-associated membrane protein 3 (282 aa).

The disordered stretch occupies residues 1-36; it reads MAGKHGRNGFEDDDVNPFAGGSVPPANNSRLPPLSH. Residues 1–117 lie on the Cytoplasmic side of the membrane; sequence MAGKHGRNGF…EIPIHLQRMQ (117 aa). The stretch at 48-92 forms a coiled coil; the sequence is LDSSKDLKKKEKELQAMEAELNKRERELKRKEEAAAQAGIVIEDK. The next 4 membrane-spanning stretches (helical) occupy residues 118–138, 148–168, 185–205, and 230–250; these read YLAFSSFLGLAACLFWNIIAT, VIIWLLAIIYFISGVPGAYVL, FGWFFLFYLIHIIFCVWAAVA, and IVGIFYFVGFGLFCLESLLSI. Residues 251-282 are Cytoplasmic-facing; that stretch reads GVIQQVYMYFRGSGKAAEMKREAARGALSSAF.

It belongs to the SCAMP family.

Its subcellular location is the cell membrane. It localises to the cytoplasmic vesicle. The protein localises to the secretory vesicle membrane. Probably involved in membrane trafficking. In Oryza sativa subsp. japonica (Rice), this protein is Secretory carrier-associated membrane protein 3 (SCAMP3).